A 255-amino-acid chain; its full sequence is Leucyl/phenylalanyl-tRNA--protein transferase (255 aa).

The protein belongs to the L/F-transferase family.

Its subcellular location is the cytoplasm. The catalysed reaction is N-terminal L-lysyl-[protein] + L-leucyl-tRNA(Leu) = N-terminal L-leucyl-L-lysyl-[protein] + tRNA(Leu) + H(+). It carries out the reaction N-terminal L-arginyl-[protein] + L-leucyl-tRNA(Leu) = N-terminal L-leucyl-L-arginyl-[protein] + tRNA(Leu) + H(+). It catalyses the reaction L-phenylalanyl-tRNA(Phe) + an N-terminal L-alpha-aminoacyl-[protein] = an N-terminal L-phenylalanyl-L-alpha-aminoacyl-[protein] + tRNA(Phe). Functionally, functions in the N-end rule pathway of protein degradation where it conjugates Leu, Phe and, less efficiently, Met from aminoacyl-tRNAs to the N-termini of proteins containing an N-terminal arginine or lysine. The protein is Leucyl/phenylalanyl-tRNA--protein transferase of Burkholderia thailandensis (strain ATCC 700388 / DSM 13276 / CCUG 48851 / CIP 106301 / E264).